The following is an 887-amino-acid chain: MQSTNDIRRSFLDYFTGAGHAEIASAPLVPYNDPTLMFVNAGMVPFKNVFTGLETPPAPTATSSQKCVRAGGKHNDLDNVGYTARHHTFFEMLGNFSFGDYFKEQAIEHAWTLLTREWGIDAARLTATVYHTDDEAYDFWRKIAGLPEERIIRIATKDNFWAMGDDGPCGPCSEIFFDHGDHIFGGPPGSPEEDGDRFVEVWNLVFMQHEQTGGEITGDLPNKNIDTGMGLERIAAVMQGVHDNYDTDTFKELIGASEGLTGVKAEGDQAASHRVIADHLRSTSFLIADGVLPSSEGRGYVLRRIMRRAMRHAHLLGASEPLMHRLVPALVTEMGQAYPELTRGQALIEETLEREEARFRQTLEKGLRLLDDATGDMSEGDTLDGETAFKLYDTYGFPYDLTEDALRPRGIAVDETGFASAMQRQKDAARAAWKGSGQAADSEVWFDIAEREGATEFTGYTSTSGEGRVVALVKNGKEVDSASAGDEVVILTNQTPFYGESGGQTGDAGTMSTPDGVKVEVTDTGKPLGRLHTHQAKIQSGTVLKGDTLHLDVDVDRRDRVRANHSATHLVHAALRNRLGEHVTQKGSLVAEDRLRFDFSHPKPLSEDDIAAIEAEVNEEIRANETVTTRLMSPDDAVDAGALALFGEKYGEEVRVLSMGRRSKEGRNYSVELCGGTHVRATGDIQLFRIISESAVSSGVRRIEALTGDAARQWLVRREEALKSAASALRTNPEEVAERVAALLDERKALEKELADARKQLALGGGGSQVAQSQDETIGDVTFSGQVINGLNPKDLRGLLDEAKQRMGSGIAAICAVNEGKAAFAAAVTDDLTDRYNAVDLVRAGVEVLGGKGGGGRPDMAQGGGPDGLKAEAALNAVRERLASAAA.

Residues His565, His569, Cys674, and His678 each contribute to the Zn(2+) site.

The protein belongs to the class-II aminoacyl-tRNA synthetase family. The cofactor is Zn(2+).

Its subcellular location is the cytoplasm. The enzyme catalyses tRNA(Ala) + L-alanine + ATP = L-alanyl-tRNA(Ala) + AMP + diphosphate. Its function is as follows. Catalyzes the attachment of alanine to tRNA(Ala) in a two-step reaction: alanine is first activated by ATP to form Ala-AMP and then transferred to the acceptor end of tRNA(Ala). Also edits incorrectly charged Ser-tRNA(Ala) and Gly-tRNA(Ala) via its editing domain. The polypeptide is Alanine--tRNA ligase (Erythrobacter litoralis (strain HTCC2594)).